A 170-amino-acid polypeptide reads, in one-letter code: Protein ECM34 (170 aa).

The N-linked (GlcNAc...) asparagine glycan is linked to Asn45. A run of 2 helical transmembrane segments spans residues 51 to 71 (IWLL…GIGG) and 98 to 118 (TIVI…FKMY).

Belongs to the DUP/COS family.

The protein localises to the membrane. In terms of biological role, may be involved in cell wall organization and biogenesis. In Saccharomyces cerevisiae (strain ATCC 204508 / S288c) (Baker's yeast), this protein is Protein ECM34 (ECM34).